The following is a 326-amino-acid chain: Pyruvate dehydrogenase E1 component subunit alpha (326 aa).

Heterodimer of an alpha and a beta chain. Thiamine diphosphate serves as cofactor.

It catalyses the reaction N(6)-[(R)-lipoyl]-L-lysyl-[protein] + pyruvate + H(+) = N(6)-[(R)-S(8)-acetyldihydrolipoyl]-L-lysyl-[protein] + CO2. Its function is as follows. The pyruvate dehydrogenase complex catalyzes the overall conversion of pyruvate to acetyl-CoA and CO(2). It contains multiple copies of three enzymatic components: pyruvate dehydrogenase (E1), dihydrolipoamide acetyltransferase (E2) and lipoamide dehydrogenase (E3). This chain is Pyruvate dehydrogenase E1 component subunit alpha (pdhA), found in Rickettsia felis (strain ATCC VR-1525 / URRWXCal2) (Rickettsia azadi).